We begin with the raw amino-acid sequence, 202 residues long: Orotate phosphoribosyltransferase (202 aa).

Residues R94, K98, H100, and 120–128 (EDLISTGGS) each bind 5-phospho-alpha-D-ribose 1-diphosphate. Position 124 (S124) interacts with orotate.

The protein belongs to the purine/pyrimidine phosphoribosyltransferase family. PyrE subfamily. As to quaternary structure, homodimer. Mg(2+) is required as a cofactor.

It catalyses the reaction orotidine 5'-phosphate + diphosphate = orotate + 5-phospho-alpha-D-ribose 1-diphosphate. It functions in the pathway pyrimidine metabolism; UMP biosynthesis via de novo pathway; UMP from orotate: step 1/2. Catalyzes the transfer of a ribosyl phosphate group from 5-phosphoribose 1-diphosphate to orotate, leading to the formation of orotidine monophosphate (OMP). This is Orotate phosphoribosyltransferase from Oceanobacillus iheyensis (strain DSM 14371 / CIP 107618 / JCM 11309 / KCTC 3954 / HTE831).